A 367-amino-acid chain; its full sequence is Glutamate 5-kinase (367 aa).

K10 contributes to the ATP binding site. Positions 137 and 149 each coordinate substrate. Residues 169–170 (TD) and 211–217 (TGGMATK) each bind ATP. The PUA domain occupies 275 to 353 (AGEITVDDGA…QQISEILGYE (79 aa)).

It belongs to the glutamate 5-kinase family.

The protein resides in the cytoplasm. It carries out the reaction L-glutamate + ATP = L-glutamyl 5-phosphate + ADP. The protein operates within amino-acid biosynthesis; L-proline biosynthesis; L-glutamate 5-semialdehyde from L-glutamate: step 1/2. Functionally, catalyzes the transfer of a phosphate group to glutamate to form L-glutamate 5-phosphate. The chain is Glutamate 5-kinase from Yersinia pestis bv. Antiqua (strain Antiqua).